Consider the following 32-residue polypeptide: Seminal plasma protein PDC-109 (32 aa).

Residues Asp-1–Asn-32 form a disordered region. An O-linked (GalNAc...) threonine glycan is attached at Thr-11. A Fibronectin type-II domain is found at His-19–Asn-32.

Belongs to the seminal plasma protein family. In terms of assembly, homodimer.

Its subcellular location is the secreted. Could enhance the fertilizing capacity of bull spermatozoa upon interaction with heparin-like glycosaminoglycans present in the female genital tract. Exhibits both simulatory and inhibitory actions on the release of pituitary gonadotropins. Binds to heparin and gelatin. The sequence is that of Seminal plasma protein PDC-109 from Bos indicus (Zebu).